A 430-amino-acid polypeptide reads, in one-letter code: Trigger factor (430 aa).

The PPIase FKBP-type domain occupies 157-242 (GDLVALETWS…AVEVSEPVLP (86 aa)).

The protein belongs to the FKBP-type PPIase family. Tig subfamily.

Its subcellular location is the cytoplasm. It carries out the reaction [protein]-peptidylproline (omega=180) = [protein]-peptidylproline (omega=0). Its function is as follows. Involved in protein export. Acts as a chaperone by maintaining the newly synthesized protein in an open conformation. Functions as a peptidyl-prolyl cis-trans isomerase. The polypeptide is Trigger factor (Xanthomonas campestris pv. campestris (strain B100)).